Consider the following 79-residue polypeptide: Exodeoxyribonuclease 7 small subunit (79 aa).

The protein belongs to the XseB family. As to quaternary structure, heterooligomer composed of large and small subunits.

It localises to the cytoplasm. It carries out the reaction Exonucleolytic cleavage in either 5'- to 3'- or 3'- to 5'-direction to yield nucleoside 5'-phosphates.. Functionally, bidirectionally degrades single-stranded DNA into large acid-insoluble oligonucleotides, which are then degraded further into small acid-soluble oligonucleotides. The sequence is that of Exodeoxyribonuclease 7 small subunit from Lactococcus lactis subsp. cremoris (strain MG1363).